Reading from the N-terminus, the 1172-residue chain is Thrombospondin-2 (1172 aa).

A signal peptide spans 1–18 (MVWRLVLLALWVWPSTQA). In terms of domain architecture, Laminin G-like spans 19–215 (GHQDKDTTFD…LQNVHLVFEN (197 aa)). The interval 19 to 232 (GHQDKDTTFD…KKGCQQGQGA (214 aa)) is heparin-binding. Residues N151, N316, and N330 are each glycosylated (N-linked (GlcNAc...) asparagine). One can recognise a VWFC domain in the interval 318 to 375 (SACWQDGRFFAENETWVVDSCTTCTCKKFKTICHQITCPPATCASPSFVEGECCPSCL). 3 TSP type-1 domains span residues 381-431 (EEGW…SKCD), 437-492 (DGGW…APCP), and 494-549 (DGRW…RSCP). 27 cysteine pairs are disulfide-bonded: C393/C425, C397/C430, C408/C415, C449/C486, C453/C491, C464/C476, C506/C543, C510/C548, C521/C533, C553/C564, C558/C574, C577/C588, C594/C610, C601/C619, C622/C646, C652/C665, C659/C678, C680/C691, C707/C715, C720/C740, C756/C776, C779/C799, C815/C835, C838/C858, C876/C896, C912/C932, and C948/C1169. N-linked (GlcNAc...) asparagine glycosylation is present at N457. In terms of domain architecture, EGF-like 1 spans 549-589 (PVDGCLSNPCFPGAQCSSFPDGSWSCGSCPVGFLGNGTHCE). N-linked (GlcNAc...) asparagine glycosylation occurs at N584. In terms of domain architecture, EGF-like 2 spans 648–692 (PENPCKDKTHNCHKHAECIYLGHFSDPMYKCECQTGYAGDGLICG). TSP type-3 repeat units lie at residues 693-728 (EDSD…NSGQ), 729-764 (EDFD…NPRQ), 765-787 (ADYD…NPAQ), 788-823 (IDTD…NTDQ), 824-846 (RDTD…NPDQ), 847-884 (TDVD…NANQ), 885-920 (ADHD…NPDQ), and 921-956 (EDLD…AISE). An N-linked (GlcNAc...) asparagine glycan is attached at N710. The interval 843–931 (NPDQTDVDND…DLDGDGRGDI (89 aa)) is disordered. The span at 847-866 (TDVDNDLVGDQCDNNEDIDD) shows a compositional bias: acidic residues. Residues 870–884 (QNNQDNCPYISNANQ) are compositionally biased toward polar residues. Acidic residues predominate over residues 896 to 905 (CDPDDDNDGV). Residues 928-930 (RGD) carry the Cell attachment site motif. The region spanning 960–1172 (RNFQMVPLDP…SDLKYECRDI (213 aa)) is the TSP C-terminal domain. N1069 carries an N-linked (GlcNAc...) asparagine glycan.

It belongs to the thrombospondin family. Homotrimer; disulfide-linked. Interacts (via the TSP type I repeats) with CD36; the interaction conveys an antiangiogenic effect. Interacts (via the TSP type I repeats) with HRG; the interaction blocks the antiangiogenic effect of THBS2 with CD36. Can bind to fibrinogen, fibronectin, laminin and type V collagen. High expression in invertebral disk tissue.

In terms of biological role, adhesive glycoprotein that mediates cell-to-cell and cell-to-matrix interactions. Ligand for CD36 mediating antiangiogenic properties. The protein is Thrombospondin-2 (THBS2) of Homo sapiens (Human).